The sequence spans 245 residues: Octopine transport system permease protein OccM (245 aa).

5 helical membrane passes run 12-32 (FIAL…SIAV), 57-77 (FYIF…IYYG), 96-116 (AYWC…AEIM), 163-183 (VLMV…ITGI), and 199-219 (ACAG…FALI). The ABC transmembrane type-1 domain occupies 19-216 (IPLALKLAVF…TMNFIAARLF (198 aa)).

It belongs to the binding-protein-dependent transport system permease family. HisMQ subfamily.

It localises to the cell inner membrane. In terms of biological role, component of the octopine active transport system probably consisting of four subunits: Q, M, P and T. The polypeptide is Octopine transport system permease protein OccM (occM) (Rhizobium meliloti (Ensifer meliloti)).